The chain runs to 393 residues: SEC12-like protein 2 (393 aa).

The residue at position 2 (alanine 2) is an N-acetylalanine. At 2 to 367 (ANQSTETNQP…EQKGDKPGVR (366 aa)) the chain is on the cytoplasmic side. The interval 41-67 (EKSEDDDESSSSSSSSRSCIVLSGGGG) is disordered. Residue serine 43 is modified to Phosphoserine. WD repeat units follow at residues 151–190 (RDVG…TLLN), 193–231 (QAHS…AVAS), 283–322 (IKKN…TIQV), and 326–367 (AHLG…PGVR). A helical; Signal-anchor for type II membrane protein transmembrane segment spans residues 368-388 (WWLLVLLIVLLYVVAYYYMKA). Topologically, residues 389–393 (KGIIP) are lumenal.

Interacts with BZIP28.

It is found in the endoplasmic reticulum membrane. Its subcellular location is the golgi apparatus. The protein localises to the cis-Golgi network membrane. Required for the formation or budding of transport vesicles from the ER. This chain is SEC12-like protein 2 (STL2P), found in Arabidopsis thaliana (Mouse-ear cress).